The chain runs to 142 residues: Large ribosomal subunit protein bL17 (142 aa).

Belongs to the bacterial ribosomal protein bL17 family. Part of the 50S ribosomal subunit. Contacts protein L32.

The chain is Large ribosomal subunit protein bL17 from Chlamydia muridarum (strain MoPn / Nigg).